The primary structure comprises 1124 residues: Putative DNA mismatch repair protein mutS homolog L359 (1124 aa).

ATP is bound at residue 779–786 (SNNWAGKS).

The protein belongs to the DNA mismatch repair MutS family.

In terms of biological role, may be involved in DNA-mismatch repair. This is Putative DNA mismatch repair protein mutS homolog L359 from Acanthamoeba polyphaga (Amoeba).